Reading from the N-terminus, the 352-residue chain is Cell division protein ZipA (352 aa).

At 1–6 (MKDLQL) the chain is on the periplasmic side. Residues 7-27 (VLFVLGAIAIIAVLVHGFWSI) traverse the membrane as a helical segment. The Cytoplasmic segment spans residues 28-352 (RKQQPKSMKQ…KDYLRRLNAA (325 aa)). Disordered regions lie at residues 78-120 (KPVL…HVEP) and 138-160 (PAPT…TSTA). The segment covering 83 to 105 (TNLSQKPHSGTTKLTDTPLQDSL) has biased composition (polar residues). Positions 111 to 120 (HKTEPEHVEP) are enriched in basic and acidic residues. Residues 141–160 (TASTSMNTPKKIFNPSTSTA) are compositionally biased toward polar residues.

The protein belongs to the ZipA family. In terms of assembly, interacts with FtsZ via their C-terminal domains.

Its subcellular location is the cell inner membrane. In terms of biological role, essential cell division protein that stabilizes the FtsZ protofilaments by cross-linking them and that serves as a cytoplasmic membrane anchor for the Z ring. Also required for the recruitment to the septal ring of downstream cell division proteins. The sequence is that of Cell division protein ZipA from Shewanella frigidimarina (strain NCIMB 400).